A 714-amino-acid polypeptide reads, in one-letter code: MDMTSAFTLNVRLDHIAVVTIDVPGEKMNTLKAEFAAQVRAILKEIRENKEIRGVVFISAKADNFIAGADINMIDHCNTAMEAETLARQGQQLMAEIHALPVPVIAAIHGACLGGGLELALACHGRICTDDPKTILGLPEVQLGLLPGSGGTQRLPRLVGLSTALDMILTGKQLRPGQALKSGLVDEIVPQSILLQAAVERAKQERQTPRSLPVRERILAGPLGRSLLFRFVSKKTDQKTQGNYPATTRILDVIETGLSQGSSSGYDAEARAFGELAMTSQSQSLRNIFFASTEVKKDPGSTVQPGTLDSIGILGGGLMGGGIAFVTACKAGLPVRIKDINPQGINHALKYSWQLLDAKVRRRHIKAGEQARQLAKISGTTDYQGFAHRDVVIEAVFEDLSLKQQMVAEVEKNCGLHTIFASNTSSIPISDIAAHATRPEQVIGLHFFSPVEKMPLVEVIPHAATSEKTIATIVKLAKKQGKTPIVVQDKAGFYVNRILAPYINEAIRLLTEGEKVETIDTALVKFGFPVGPIQLLDEVGIDTGTKIIPVLEAAYGERFSAPANVVSSILNDDRKGRKNGRGFYLYGAKGRKSKKQVDPEIYKIIAVQGQSKLSAQQITERCVMLMLNEAARCYREGVIRHARDGDIGAVFGIGFPPFLGGPFRYMDSLGASEVVAVLQRLTSLYGSRFTPCEQLLQMAERGESFWKTSATDRH.

Positions 1–190 (MDMTSAFTLN…KSGLVDEIVP (190 aa)) are enoyl-CoA hydratase. Positions 306–714 (GTLDSIGILG…FWKTSATDRH (409 aa)) are 3-hydroxyacyl-CoA dehydrogenase.

The protein in the N-terminal section; belongs to the enoyl-CoA hydratase/isomerase family. This sequence in the central section; belongs to the 3-hydroxyacyl-CoA dehydrogenase family. In terms of assembly, heterotetramer of two alpha chains (FadJ) and two beta chains (FadI).

The protein resides in the cytoplasm. The enzyme catalyses a (3S)-3-hydroxyacyl-CoA = a (2E)-enoyl-CoA + H2O. It catalyses the reaction a 4-saturated-(3S)-3-hydroxyacyl-CoA = a (3E)-enoyl-CoA + H2O. It carries out the reaction a (3S)-3-hydroxyacyl-CoA + NAD(+) = a 3-oxoacyl-CoA + NADH + H(+). The catalysed reaction is (3S)-3-hydroxybutanoyl-CoA = (3R)-3-hydroxybutanoyl-CoA. Its pathway is lipid metabolism; fatty acid beta-oxidation. In terms of biological role, catalyzes the formation of a hydroxyacyl-CoA by addition of water on enoyl-CoA. Also exhibits 3-hydroxyacyl-CoA epimerase and 3-hydroxyacyl-CoA dehydrogenase activities. The polypeptide is Fatty acid oxidation complex subunit alpha (Escherichia fergusonii (strain ATCC 35469 / DSM 13698 / CCUG 18766 / IAM 14443 / JCM 21226 / LMG 7866 / NBRC 102419 / NCTC 12128 / CDC 0568-73)).